Reading from the N-terminus, the 106-residue chain is UPF0060 membrane protein RHE_CH01408 (106 aa).

The next 4 helical transmembrane spans lie at 4–24, 30–50, 59–79, and 86–106; these read IIYA…WAWL, AWWL…LTLV, FAAY…LIEG, and DIGG…APRA.

The protein belongs to the UPF0060 family.

Its subcellular location is the cell inner membrane. The protein is UPF0060 membrane protein RHE_CH01408 of Rhizobium etli (strain ATCC 51251 / DSM 11541 / JCM 21823 / NBRC 15573 / CFN 42).